A 595-amino-acid chain; its full sequence is Sialic acid-binding Ig-like lectin 12 (595 aa).

A signal peptide spans Met-1 to Ala-18. Ig-like V-type domains lie at Lys-19 to Thr-142 and Ala-143 to Thr-269. The Extracellular portion of the chain corresponds to Lys-19–Ala-481. A disulfide bond links Cys-44 and Cys-104. N-linked (GlcNAc...) asparagine glycosylation is found at Asn-140, Asn-179, Asn-230, and Asn-290. Intrachain disulfides connect Cys-166-Cys-299, Cys-171-Cys-231, and Cys-293-Cys-342. One can recognise an Ig-like C2-type 1 domain in the interval Pro-275–Arg-358. Residues Asn-360, Asn-367, and Asn-385 are each glycosylated (N-linked (GlcNAc...) asparagine). An Ig-like C2-type 2 domain is found at Pro-365–Ser-462. Cysteines 401 and 446 form a disulfide. A helical transmembrane segment spans residues Phe-482 to Val-502. The Cytoplasmic segment spans residues Arg-503–Lys-595. The tract at residues Pro-512–Glu-560 is disordered. The ITIM motif signature appears at Ile-563–Leu-568. Residues Tyr-565 and Tyr-588 each carry the phosphotyrosine modification. Residues Tyr-586 to Ile-591 carry the SLAM-like motif motif.

This sequence belongs to the immunoglobulin superfamily. SIGLEC (sialic acid binding Ig-like lectin) family. In terms of tissue distribution, isoform Short is highly expressed in spleen, small intestine and adrenal gland; it is lower expressed in thyroid, placenta, brain, stomach, bone marrow, spinal cord and breast. Isoform Long is highly expressed in spleen, small intestine and bone marrow; it is lower expressed in thyroid, placenta, thymus, trachea, stomach, lung, adrenal gland, fetal brain and testis.

Its subcellular location is the membrane. In terms of biological role, putative adhesion molecule that mediates sialic-acid dependent binding to cells. The sialic acid recognition site may be masked by cis interactions with sialic acids on the same cell surface. The chain is Sialic acid-binding Ig-like lectin 12 (SIGLEC12) from Homo sapiens (Human).